Consider the following 209-residue polypeptide: Probable glutathione peroxidase 8 (209 aa).

Methionine 1 is modified (N-acetylmethionine). A helical transmembrane segment spans residues 18-40; that stretch reads IFAVLLSMVLCTVMLFLLQLKFL. Residue cysteine 79 is part of the active site.

This sequence belongs to the glutathione peroxidase family.

It is found in the membrane. It carries out the reaction 2 glutathione + H2O2 = glutathione disulfide + 2 H2O. This is Probable glutathione peroxidase 8 (Gpx8) from Mus musculus (Mouse).